Reading from the N-terminus, the 185-residue chain is Intraflagellar transport protein 22 homolog (185 aa).

GTP is bound by residues 10-17 (GPCESGKT), 63-67 (DCGGD), and 123-126 (HKPG). Position 137 is a phosphoserine (Ser137).

This sequence belongs to the small GTPase superfamily. Rab family. In terms of assembly, component of the IFT complex B, at least composed of IFT20, IFT22, IFT25, IFT27, IFT46, IFT52, TRAF3IP1/IFT54, IFT57, IFT74, IFT80, IFT81, and IFT88. Interacts with IFT88. Interacts with CFAP61.

It localises to the cell projection. Its subcellular location is the cilium. In terms of biological role, small GTPase-like component of the intraflagellar transport (IFT) complex B. The chain is Intraflagellar transport protein 22 homolog (Ift22) from Rattus norvegicus (Rat).